The primary structure comprises 381 residues: Cytochrome b (381 aa).

A run of 4 helical transmembrane segments spans residues 31-51 (FGFLSSICLIVQILTGIFLAM), 75-97 (WLLRYIHTNGASMFFIVVYIHIF), 112-132 (VWVIGVLILLLMILTAFIGYV), and 178-198 (FFSLHYLMPFVIAAVSLVHLA). The heme b site is built by His81 and His95. Heme b contacts are provided by His182 and His196. His201 provides a ligand contact to a ubiquinone. The next 4 membrane-spanning stretches (helical) occupy residues 224–244 (FIVKDFLGMVIFIIFFSIFVY), 288–308 (LGGVTAMISAIAILAFLPWIH), 320–340 (LYRLFYWVMISCCLILGWIGG), and 347–367 (YVIIGQIASIYYFIYFIILLP).

The protein belongs to the cytochrome b family. As to quaternary structure, the main subunits of complex b-c1 are: cytochrome b, cytochrome c1 and the Rieske protein. The cofactor is heme b.

The protein localises to the mitochondrion inner membrane. Functionally, component of the ubiquinol-cytochrome c reductase complex (complex III or cytochrome b-c1 complex) that is part of the mitochondrial respiratory chain. The b-c1 complex mediates electron transfer from ubiquinol to cytochrome c. Contributes to the generation of a proton gradient across the mitochondrial membrane that is then used for ATP synthesis. In Chondrus crispus (Carrageen Irish moss), this protein is Cytochrome b (MT-CYB).